Reading from the N-terminus, the 291-residue chain is 33 kDa chaperonin (291 aa).

Cystine bridges form between Cys-237–Cys-239 and Cys-270–Cys-273.

Belongs to the HSP33 family. Under oxidizing conditions two disulfide bonds are formed involving the reactive cysteines. Under reducing conditions zinc is bound to the reactive cysteines and the protein is inactive.

Its subcellular location is the cytoplasm. In terms of biological role, redox regulated molecular chaperone. Protects both thermally unfolding and oxidatively damaged proteins from irreversible aggregation. Plays an important role in the bacterial defense system toward oxidative stress. This chain is 33 kDa chaperonin, found in Bacillus mycoides (strain KBAB4) (Bacillus weihenstephanensis).